The chain runs to 765 residues: Amine oxidase [copper-containing] 3 (765 aa).

At methionine 1 to threonine 6 the chain is on the cytoplasmic side. Residues leucine 7–glycine 27 traverse the membrane as a helical; Signal-anchor for type II membrane protein segment. At arginine 28–asparagine 765 the chain is on the extracellular side. Asparagine 137 carries N-linked (GlcNAc...) asparagine glycosylation. A disulfide bridge links cysteine 198 with cysteine 199. N-linked (GlcNAc...) asparagine glycans are attached at residues asparagine 232 and asparagine 294. Aspartate 386 acts as the Proton acceptor in catalysis. Cysteine 404 and cysteine 430 are oxidised to a cystine. Catalysis depends on tyrosine 471, which acts as the Schiff-base intermediate with substrate; via topaquinone. Tyrosine 471 carries the 2',4',5'-topaquinone modification. Positions 520 and 522 each coordinate Cu(2+). Residues aspartate 529, leucine 530, aspartate 531, and glutamate 572 each coordinate Ca(2+). N-linked (GlcNAc...) asparagine glycosylation occurs at asparagine 592. Glutamate 641 serves as a coordination point for Ca(2+). N-linked (GlcNAc...) asparagine glycosylation is present at asparagine 659. Phenylalanine 663 serves as a coordination point for Ca(2+). Residue asparagine 666 is glycosylated (N-linked (GlcNAc...) asparagine). The Ca(2+) site is built by glutamate 667, aspartate 673, and leucine 674. Cu(2+) is bound at residue histidine 684. Cysteine 734 and cysteine 741 are oxidised to a cystine.

This sequence belongs to the copper/topaquinone oxidase family. In terms of assembly, homodimer; disulfide-linked. Probably forms heterodimers with AOC2. It depends on Cu(2+) as a cofactor. Ca(2+) serves as cofactor. The cofactor is L-topaquinone. Topaquinone (TPQ) is generated by copper-dependent autoxidation of a specific tyrosyl residue. Post-translationally, N- and O-glycosylated.

The protein localises to the cell membrane. The catalysed reaction is methylamine + O2 + H2O = formaldehyde + H2O2 + NH4(+). It carries out the reaction benzylamine + O2 + H2O = benzaldehyde + H2O2 + NH4(+). It catalyses the reaction 2-phenylethylamine + O2 + H2O = 2-phenylacetaldehyde + H2O2 + NH4(+). In terms of biological role, catalyzes the oxidative deamination of primary amines to the corresponding aldehydes with the concomitant production of hydrogen peroxide and ammonia. Has a preference for the primary monoamines methylamine and benzylamine. Could also act on 2-phenylethylamine but much less efficiently. At endothelial cells surface can also function as a cell adhesion protein that participates in lymphocyte extravasation and recirculation by mediating the binding of lymphocytes to peripheral lymph node vascular endothelial cells in an L-selectin-independent fashion. The sequence is that of Amine oxidase [copper-containing] 3 from Mus musculus (Mouse).